A 459-amino-acid polypeptide reads, in one-letter code: tRNA modification GTPase MnmE (459 aa).

Arg23, Glu88, and Arg127 together coordinate (6S)-5-formyl-5,6,7,8-tetrahydrofolate. A TrmE-type G domain is found at 223–381; sequence GLSVVIVGKP…IKNCIKELFF (159 aa). Asn233 serves as a coordination point for K(+). GTP is bound by residues 233-238, 252-258, and 277-280; these read NVGKSS, TDIPGTT, and DTAG. Residue Ser237 participates in Mg(2+) binding. Residues Thr252, Ile254, and Thr257 each contribute to the K(+) site. Thr258 lines the Mg(2+) pocket. (6S)-5-formyl-5,6,7,8-tetrahydrofolate is bound at residue Lys459.

It belongs to the TRAFAC class TrmE-Era-EngA-EngB-Septin-like GTPase superfamily. TrmE GTPase family. Homodimer. Heterotetramer of two MnmE and two MnmG subunits. The cofactor is K(+).

The protein localises to the cytoplasm. Exhibits a very high intrinsic GTPase hydrolysis rate. Involved in the addition of a carboxymethylaminomethyl (cmnm) group at the wobble position (U34) of certain tRNAs, forming tRNA-cmnm(5)s(2)U34. The sequence is that of tRNA modification GTPase MnmE from Clostridium kluyveri (strain ATCC 8527 / DSM 555 / NBRC 12016 / NCIMB 10680 / K1).